Reading from the N-terminus, the 312-residue chain is DNA-directed RNA polymerase subunit alpha (312 aa).

The alpha N-terminal domain (alpha-NTD) stretch occupies residues 1 to 226 (MIEFEKPKIT…DHLNLFVDLS (226 aa)). The tract at residues 243–312 (TERVLDKIIE…ELGLSLKKRK (70 aa)) is alpha C-terminal domain (alpha-CTD).

Belongs to the RNA polymerase alpha chain family. Homodimer. The RNAP catalytic core consists of 2 alpha, 1 beta, 1 beta' and 1 omega subunit. When a sigma factor is associated with the core the holoenzyme is formed, which can initiate transcription.

It carries out the reaction RNA(n) + a ribonucleoside 5'-triphosphate = RNA(n+1) + diphosphate. DNA-dependent RNA polymerase catalyzes the transcription of DNA into RNA using the four ribonucleoside triphosphates as substrates. In Lactococcus lactis subsp. cremoris (strain MG1363), this protein is DNA-directed RNA polymerase subunit alpha.